Reading from the N-terminus, the 414-residue chain is GA-binding protein subunit beta-2 (414 aa).

ANK repeat units lie at residues 5-34 (DLGK…PFTT), 37-66 (LGTS…SRDA), 70-99 (VDRT…DVNA), 103-132 (LQMT…DVYA), and 136-166 (FDKS…QVNT). At serine 218 the chain carries Phosphoserine. Residues 310 to 362 (EEMKEGSERELLQQQLQEANRRAQEYRHQLLKKEQEAEQYRLRLEAMAQQQTN) adopt a coiled-coil conformation.

In terms of assembly, heterotetramer of two alpha and two beta subunits. The C-terminal is necessary for the formation of a heterotetrameric GABP-alpha-2/beta-2 complex, and also facilitates homotypic dimerization. Interacts with ADGRB2. As to expression, high levels in thymus, spleen, kidney and intestine.

It localises to the nucleus. Functionally, transcription factor capable of interacting with purine rich repeats (GA repeats). Must associate with GABP-alpha to bind DNA. The sequence is that of GA-binding protein subunit beta-2 (Gabpb2) from Mus musculus (Mouse).